The primary structure comprises 360 residues: Photosystem II protein D1 (360 aa).

3 consecutive transmembrane segments (helical) span residues 32–49 (YLGW…SATF), 121–136 (HFFI…EWEL), and 145–159 (WIFV…AASA). Residue histidine 121 coordinates chlorophyll a. Tyrosine 129 lines the pheophytin a pocket. [CaMn4O5] cluster-binding residues include aspartate 173 and glutamate 192. Residues 200–221 (LHMFGVAAVFGGSLFSAMHGSL) form a helical membrane-spanning segment. Histidine 201 contributes to the chlorophyll a binding site. A quinone is bound by residues histidine 218 and 267–268 (SF). Histidine 218 serves as a coordination point for Fe cation. Residue histidine 275 coordinates Fe cation. The helical transmembrane segment at 277-291 (FLGAWPVVGIWLTAM) threads the bilayer. Residues histidine 335, glutamate 336, aspartate 345, and alanine 347 each contribute to the [CaMn4O5] cluster site. Residues 348-360 (CANCLLSLWPMVG) constitute a propeptide that is removed on maturation.

It belongs to the reaction center PufL/M/PsbA/D family. PSII is composed of 1 copy each of membrane proteins PsbA, PsbB, PsbC, PsbD, PsbE, PsbF, PsbH, PsbI, PsbJ, PsbK, PsbL, PsbM, PsbT, PsbX, PsbY, PsbZ, Psb30/Ycf12, at least 3 peripheral proteins of the oxygen-evolving complex and a large number of cofactors. It forms dimeric complexes. The D1/D2 heterodimer binds P680, chlorophylls that are the primary electron donor of PSII, and subsequent electron acceptors. It shares a non-heme iron and each subunit binds pheophytin, quinone, additional chlorophylls, carotenoids and lipids. D1 provides most of the ligands for the Mn4-Ca-O5 cluster of the oxygen-evolving complex (OEC). There is also a Cl(-1) ion associated with D1 and D2, which is required for oxygen evolution. The PSII complex binds additional chlorophylls, carotenoids and specific lipids. is required as a cofactor. Post-translationally, tyr-164 forms a radical intermediate that is referred to as redox-active TyrZ, YZ or Y-Z. C-terminally processed by CtpA; processing is essential to allow assembly of the oxygen-evolving complex and thus photosynthetic growth.

The protein resides in the plastid. Its subcellular location is the chloroplast thylakoid membrane. It carries out the reaction 2 a plastoquinone + 4 hnu + 2 H2O = 2 a plastoquinol + O2. Photosystem II (PSII) is a light-driven water:plastoquinone oxidoreductase that uses light energy to abstract electrons from H(2)O, generating O(2) and a proton gradient subsequently used for ATP formation. It consists of a core antenna complex that captures photons, and an electron transfer chain that converts photonic excitation into a charge separation. The D1/D2 (PsbA/PsbD) reaction center heterodimer binds P680, the primary electron donor of PSII as well as several subsequent electron acceptors. This Karenia mikimotoi (Red tide dinoflagellate) protein is Photosystem II protein D1.